The following is a 220-amino-acid chain: Putative respiratory nitrate reductase subunit Rieske (220 aa).

Residues 118–206 (KAPTLLVRHA…ITVSSEGYLI (89 aa)) form the Rieske domain. Residues Cys-151, His-153, Cys-168, and His-171 each contribute to the [2Fe-2S] cluster site. Cys-156 and Cys-170 form a disulfide bridge.

As to quaternary structure, probable multiprotein complex; a catalytic heterodimer of an alpha and beta chain is proposed to associate with additional subunits involved in membrane attachment and electron transfer. The cofactor is [2Fe-2S] cluster.

The protein resides in the cell membrane. In terms of biological role, the respiratory membrane-bound nitrate reductase enzyme complex plays a role in generation of metabolic energy by using nitrate as a terminal electron acceptor during anaerobic conditions. Proposed Rieske subunit involved in a protonmotive Q-cycle mechanism-based electron transfer electrons to the beta subunit. The sequence is that of Putative respiratory nitrate reductase subunit Rieske (narB) from Haloferax mediterranei (strain ATCC 33500 / DSM 1411 / JCM 8866 / NBRC 14739 / NCIMB 2177 / R-4) (Halobacterium mediterranei).